The primary structure comprises 459 residues: Protein king tubby (459 aa).

Residues 114 to 205 (HELEDEESSP…SNGAGGESEG (92 aa)) are disordered. The span at 123–155 (PVTVIEQQQTAPHSANSTHSQRPSTTRQPSFND) shows a compositional bias: polar residues. At Ser152 the chain carries Phosphoserine.

This sequence belongs to the TUB family.

It localises to the cytoplasm. It is found in the nucleus. Its subcellular location is the cell projection. The protein resides in the cilium membrane. The protein localises to the rhabdomere. The protein is Protein king tubby of Drosophila persimilis (Fruit fly).